The chain runs to 365 residues: Chorismate synthase (365 aa).

The span at 41 to 51 (IQKELDRRRPG) shows a compositional bias: basic and acidic residues. Positions 41–62 (IQKELDRRRPGQSEVSTPRSEA) are disordered. An NADP(+)-binding site is contributed by Arg-48. FMN contacts are provided by residues 125–127 (RSS), Gly-285, 300–304 (KPTPS), and Arg-327.

This sequence belongs to the chorismate synthase family. FMNH2 serves as cofactor.

The enzyme catalyses 5-O-(1-carboxyvinyl)-3-phosphoshikimate = chorismate + phosphate. Its pathway is metabolic intermediate biosynthesis; chorismate biosynthesis; chorismate from D-erythrose 4-phosphate and phosphoenolpyruvate: step 7/7. Catalyzes the anti-1,4-elimination of the C-3 phosphate and the C-6 proR hydrogen from 5-enolpyruvylshikimate-3-phosphate (EPSP) to yield chorismate, which is the branch point compound that serves as the starting substrate for the three terminal pathways of aromatic amino acid biosynthesis. This reaction introduces a second double bond into the aromatic ring system. The protein is Chorismate synthase of Methanosarcina acetivorans (strain ATCC 35395 / DSM 2834 / JCM 12185 / C2A).